The primary structure comprises 566 residues: Medium-chain fatty-acid--CoA ligase (566 aa).

I231–L242 serves as a coordination point for ATP.

This sequence belongs to the ATP-dependent AMP-binding enzyme family. In terms of assembly, homodimer. It depends on Mg(2+) as a cofactor.

Its subcellular location is the cell membrane. It catalyses the reaction hexanoate + ATP + CoA = hexanoyl-CoA + AMP + diphosphate. It carries out the reaction octanoate + ATP + CoA = octanoyl-CoA + AMP + diphosphate. The catalysed reaction is dodecanoate + ATP + CoA = dodecanoyl-CoA + AMP + diphosphate. It participates in lipid metabolism; fatty acid beta-oxidation. In terms of biological role, catalyzes the esterification, concomitant with transport, of exogenous fatty acids into metabolically active CoA thioesters for subsequent degradation or incorporation into phospholipids. Is maximally active on C6:0, C8:0 and C12:0 fatty acids, while has a low activity on C14-C18 chain length fatty acids. Is involved in the anaerobic beta-oxidative degradation of fatty acids, which allows anaerobic growth of E.coli on fatty acids as a sole carbon and energy source in the presence of nitrate or fumarate as a terminal electron acceptor. Can functionally replace FadD under anaerobic conditions. This Escherichia coli (strain K12) protein is Medium-chain fatty-acid--CoA ligase.